Reading from the N-terminus, the 245-residue chain is MSRISLEVCVDDPDGLEAAVAGGADRIELCSALGAGGLTPSPGLMAVAAPPPVPVYAMIRPRAGDFIYHRADLEVMRRDIDAARHAGLAGVVLGASLADGRLDARMLTKLAGHAAGMGLTLHRAFDLVPDFAEAMEIAVDLGFERILTSGGAKTAPEAVDTLERLIELSAGRISIMPGSGITSDTIEALVPRLAITEVHSSCSSAEPANDMRLVEMGFAAPERRRTDAAKIRAMRARLDAPAAKA.

It belongs to the CutC family.

The protein localises to the cytoplasm. This is PF03932 family protein CutC from Rhizobium meliloti (strain 1021) (Ensifer meliloti).